The chain runs to 434 residues: 4-hydroxy-3-methylbut-2-en-1-yl diphosphate synthase (flavodoxin) (434 aa).

Over residues 1 to 15 (MQSEAQSPRSSQICS) the composition is skewed to polar residues. The disordered stretch occupies residues 1-24 (MQSEAQSPRSSQICSTEPVFGGHQ). 4 residues coordinate [4Fe-4S] cluster: Cys322, Cys325, Cys368, and Glu375.

Belongs to the IspG family. [4Fe-4S] cluster is required as a cofactor.

It carries out the reaction (2E)-4-hydroxy-3-methylbut-2-enyl diphosphate + oxidized [flavodoxin] + H2O + 2 H(+) = 2-C-methyl-D-erythritol 2,4-cyclic diphosphate + reduced [flavodoxin]. The protein operates within isoprenoid biosynthesis; isopentenyl diphosphate biosynthesis via DXP pathway; isopentenyl diphosphate from 1-deoxy-D-xylulose 5-phosphate: step 5/6. Its function is as follows. Converts 2C-methyl-D-erythritol 2,4-cyclodiphosphate (ME-2,4cPP) into 1-hydroxy-2-methyl-2-(E)-butenyl 4-diphosphate. The chain is 4-hydroxy-3-methylbut-2-en-1-yl diphosphate synthase (flavodoxin) from Burkholderia ambifaria (strain MC40-6).